A 240-amino-acid polypeptide reads, in one-letter code: Phosducin-like protein 2 (240 aa).

Residues 38 to 201 (QQEAMVKPYE…LEWKLSEVGA (164 aa)) enclose the Phosducin domain. Residues 89-240 (FGELREISGN…DSSGSDTEAK (152 aa)) form a thioredoxin fold region.

Belongs to the phosducin family. In terms of assembly, interacts with the CCT chaperonin complex and actin. In terms of tissue distribution, testis-specific (at protein level).

The protein localises to the endoplasmic reticulum. Its function is as follows. Essential for male fertility, spermiogenesis and acrosome formation. This Mus musculus (Mouse) protein is Phosducin-like protein 2 (Pdcl2).